A 92-amino-acid chain; its full sequence is uncharacterized protein (92 aa).

Residues 1–10 (MGLLKKKDST) show a composition bias toward basic and acidic residues. Residues 1–21 (MGLLKKKDSTSARSSTSPCAD) are disordered. Positions 16-66 (TSPCADLRNAYHNCFNKWYSEKFVKGQWDKEECVAEWKKYRDCLSENLDGK) constitute a CHCH domain. 2 consecutive short sequence motifs (cx9C motif) follow at residues 19 to 29 (CADLRNAYHNC) and 48 to 58 (CVAEWKKYRDC). 2 disulfide bridges follow: Cys19–Cys58 and Cys29–Cys48.

It belongs to the TRIAP1/MDM35 family.

This is an uncharacterized protein from Arabidopsis thaliana (Mouse-ear cress).